The primary structure comprises 78 residues: Disintegrin DisBa-01 (78 aa).

The Disintegrin domain maps to 1–78 (GNELLEAGEE…AGCPRNPFHA (78 aa)). 6 disulfide bridges follow: Cys-11/Cys-26, Cys-13/Cys-21, Cys-20/Cys-43, Cys-34/Cys-40, Cys-39/Cys-64, and Cys-52/Cys-71. The Cell attachment site signature appears at 56-58 (RGD).

It belongs to the venom metalloproteinase (M12B) family. P-II subfamily. P-IIa sub-subfamily. In terms of assembly, monomer. As to expression, expressed by the venom gland.

It is found in the secreted. This recombinant disintegrin antagonizes integrins alpha-IIb/beta-3 (ITGA2B/ITGB3) and alpha-V/beta-3 (ITGAV/ITGB3). On ITGA2B/ITGB3, it interferes with the outside/-in phosphorylation of the focal adhesion kinase (PTK2 / FAK) downstream of the integrin. It strongly inhibits platelet aggregation induced by ADP, thrombin, and collagen, abolishes and reverses dynamic platelet recruitment to immobilized fibrinogen. In vivo, it induces a dramatic increase in the tail bleeding time, and has a strong antithrombotic activity. On ITGAV/ITGB3, it inhibits the adhesion of ITGAV/ITGB3-expressing human microvascular endothelial cell line and murine melanoma cell line to vitronectin (IC(50) are 555 nM and 225 nM, respectively), and transiently inhibits their proliferation without direct cell toxicity. In vivo, it potently inhibits angiogenesis and metastasis, probably due to its capability to strongly inhibit the expression of VEGF and its receptors in endothelial cells. It also inhibits tumor cell migration in vitro. This chain is Disintegrin DisBa-01, found in Bothrops alternatus (Urutu).